Consider the following 156-residue polypeptide: Crossover junction endodeoxyribonuclease RuvC (156 aa).

Catalysis depends on residues Asp7, Glu66, and Asp138. Mg(2+)-binding residues include Asp7, Glu66, and Asp138.

The protein belongs to the RuvC family. In terms of assembly, homodimer which binds Holliday junction (HJ) DNA. The HJ becomes 2-fold symmetrical on binding to RuvC with unstacked arms; it has a different conformation from HJ DNA in complex with RuvA. In the full resolvosome a probable DNA-RuvA(4)-RuvB(12)-RuvC(2) complex forms which resolves the HJ. Mg(2+) is required as a cofactor.

The protein localises to the cytoplasm. It carries out the reaction Endonucleolytic cleavage at a junction such as a reciprocal single-stranded crossover between two homologous DNA duplexes (Holliday junction).. Functionally, the RuvA-RuvB-RuvC complex processes Holliday junction (HJ) DNA during genetic recombination and DNA repair. Endonuclease that resolves HJ intermediates. Cleaves cruciform DNA by making single-stranded nicks across the HJ at symmetrical positions within the homologous arms, yielding a 5'-phosphate and a 3'-hydroxyl group; requires a central core of homology in the junction. The consensus cleavage sequence is 5'-(A/T)TT(C/G)-3'. Cleavage occurs on the 3'-side of the TT dinucleotide at the point of strand exchange. HJ branch migration catalyzed by RuvA-RuvB allows RuvC to scan DNA until it finds its consensus sequence, where it cleaves and resolves the cruciform DNA. The sequence is that of Crossover junction endodeoxyribonuclease RuvC from Ehrlichia chaffeensis (strain ATCC CRL-10679 / Arkansas).